The chain runs to 2769 residues: Thyroglobulin (2769 aa).

The signal sequence occupies residues 1 to 19 (MALALWVFGLLDLICLASA). Tyr-24 is modified (iodotyrosine; alternate). Tyr-24 bears the Sulfotyrosine; alternate mark. At Tyr-24 the chain carries Thyroxine; alternate. A Triiodothyronine; alternate modification is found at Tyr-24. 4 consecutive Thyroglobulin type-1 domains span residues 31-92 (LRPC…PAAC), 93-160 (LSFC…PARC), 161-297 (PRSC…RFRC), and 298-358 (PTKC…PPSC). 8 disulfide bridges follow: Cys-34–Cys-52, Cys-63–Cys-70, Cys-72–Cys-92, Cys-96–Cys-120, Cys-131–Cys-138, Cys-140–Cys-160, Cys-164–Cys-183, and Cys-194–Cys-235. Tyr-108 carries the post-translational modification Iodotyrosine. Asn-110 is a glycosylation site (N-linked (GlcNAc...) (complex) asparagine; alternate). A glycan (N-linked (GlcNAc...) (hybrid) asparagine; alternate) is linked at Asn-110. The residue at position 149 (Tyr-149) is an Iodotyrosine; alternate. At Tyr-149 the chain carries Diiodotyrosine; alternate. Tyr-234 and Tyr-258 each carry iodotyrosine. Disulfide bonds link Cys-301-Cys-319, Cys-330-Cys-336, Cys-338-Cys-358, Cys-364-Cys-619, Cys-408-Cys-607, Cys-630-Cys-635, Cys-637-Cys-657, Cys-661-Cys-686, and Cys-697-Cys-702. Asn-483 and Asn-495 each carry an N-linked (GlcNAc...) (complex) asparagine; alternate glycan. Asn-483 and Asn-495 each carry an N-linked (GlcNAc...) (hybrid) asparagine; alternate glycan. Thyroglobulin type-1 domains follow at residues 604–657 (SQGC…RPRC), 658–725 (PTEC…PKKC), 726–921 (PSPC…VPAC), 922–1073 (PGSC…IPQC), 1074–1145 (PTSC…SAQC), and 1146–1210 (PSLC…QPAC). Iodotyrosine; alternate is present on Tyr-703. Position 703 is a thyroxine; alternate (Tyr-703). Tyr-703 is subject to Triiodothyronine; alternate. The residue at position 703 (Tyr-703) is a Diiodotyrosine; alternate. Disulfide bonds link Cys-704–Cys-725, Cys-729–Cys-762, Cys-773–Cys-898, Cys-900–Cys-921, Cys-925–Cys-1031, Cys-1042–Cys-1049, Cys-1051–Cys-1073, Cys-1077–Cys-1108, Cys-1126–Cys-1145, Cys-1149–Cys-1169, Cys-1181–Cys-1188, Cys-1190–Cys-1210, Cys-1215–Cys-1264, Cys-1231–Cys-1245, Cys-1306–Cys-1356, and Cys-1331–Cys-1347. Iodotyrosine is present on Tyr-784. Asn-853 is a glycosylation site (N-linked (GlcNAc...) (complex) asparagine; alternate). Residue Asn-853 is glycosylated (N-linked (GlcNAc...) (hybrid) asparagine; alternate). Tyr-866 carries the iodotyrosine; alternate modification. Tyr-866 carries the post-translational modification Diiodotyrosine; alternate. At Tyr-883 the chain carries Diiodotyrosine. Asn-947 is a glycosylation site (N-linked (GlcNAc...) (complex) asparagine; alternate). An N-linked (GlcNAc...) (hybrid) asparagine; alternate glycan is attached at Asn-947. Iodotyrosine; alternate is present on Tyr-992. Tyr-992 carries the post-translational modification Diiodotyrosine; alternate. N-linked (GlcNAc...) (complex) asparagine; alternate glycosylation is present at Asn-1140. Residue Asn-1140 is glycosylated (N-linked (GlcNAc...) (hybrid) asparagine; alternate). Tyr-1310 is subject to Iodotyrosine. Tyr-1310 is modified (thyroxine). Asn-1365 carries N-linked (GlcNAc...) (high mannose) asparagine glycosylation. Cystine bridges form between Cys-1441/Cys-1461, Cys-1464/Cys-1475, Cys-1478/Cys-1492, Cys-1495/Cys-1512, Cys-1516/Cys-1525, Cys-1545/Cys-1567, Cys-1605/Cys-1629, Cys-1609/Cys-1615, Cys-1641/Cys-1664, Cys-1726/Cys-1751, Cys-1730/Cys-1736, Cys-1735/Cys-1836, and Cys-1762/Cys-1779. Type II repeat units follow at residues 1458-1471 (ALGC…SYFQ), 1472-1488 (DEQC…EQAG), and 1489-1505 (SLAC…VYAG). Tyr-1469 is subject to Iodotyrosine; alternate. At Tyr-1469 the chain carries Diiodotyrosine; alternate. The 55-residue stretch at 1513 to 1567 (VTDCQKNEVGLQCDQDSQYRASQRDRTSGKAFCVDGEGRRLPWTEAEAPLVDAQC) folds into the Thyroglobulin type-1 11 domain. A Type IIIA repeat occupies 1605–1725 (CLADCALDEA…GASLAEVHLF (121 aa)). The stretch at 1726–1893 (CLLACDHDSC…LFSLQQANLW (168 aa)) is one Type IIIB repeat. Asn-1776 is a glycosylation site (N-linked (GlcNAc...) (complex) asparagine; alternate). Asn-1776 is a glycosylation site (N-linked (GlcNAc...) (hybrid) asparagine; alternate). Over residues 1827 to 1842 (MGSRSESMGCRRDTEP) the composition is skewed to basic and acidic residues. Residues 1827 to 1851 (MGSRSESMGCRRDTEPRPASPSETD) are disordered. N-linked (GlcNAc...) (complex) asparagine; alternate glycosylation is present at Asn-1870. An N-linked (GlcNAc...) (hybrid) asparagine; alternate glycan is attached at Asn-1870. Disulfide bonds link Cys-1894–Cys-1920, Cys-1898–Cys-1905, Cys-1929–Cys-1940, Cys-1997–Cys-2025, Cys-2001–Cys-2007, Cys-2006–Cys-2077, and Cys-2036–Cys-2049. Residues 1894 to 1996 (CLSRCAGEPS…DKSISSGFFE (103 aa)) form a Type IIIA repeat. A Type IIIB repeat occupies 1997–2130 (CERLCDMDPC…VGNFSAARDR (134 aa)). Asn-2014 is a glycosylation site (N-linked (GlcNAc...) (high mannose) asparagine). Asn-2123 carries N-linked (GlcNAc...) (high mannose) asparagine glycosylation. Disulfide bonds link Cys-2131–Cys-2155, Cys-2135–Cys-2141, and Cys-2164–Cys-2173. Residues 2131 to 2188 (CLWECSRHQDCLVTTLQTQPGAVRCMFYADTQSCTHSLQAQNCRLLLHEEATYIYRKP) form a Type IIIA repeat. Tyr-2185 bears the Iodotyrosine mark. Residues 2189–2769 (NIPLPGFGTS…PELASKTYSK (581 aa)) are cholinesterase-like (ChEL). An N-linked (GlcNAc...) (complex) asparagine; alternate glycan is attached at Asn-2251. Residue Asn-2251 is glycosylated (N-linked (GlcNAc...) (hybrid) asparagine; alternate). A glycan (N-linked (GlcNAc...) (high mannose) asparagine) is linked at Asn-2296. Cys-2443 and Cys-2454 are disulfide-bonded. Residue Tyr-2541 is modified to Thyroxine. An Iodotyrosine; alternate modification is found at Tyr-2574. Residue Tyr-2574 is modified to Thyroxine; alternate. Tyr-2574 is subject to Triiodothyronine; alternate. Diiodotyrosine; alternate is present on Tyr-2574. An iodotyrosine mark is found at Tyr-2588 and Tyr-2618. Cys-2592 and Cys-2716 are oxidised to a cystine. Diiodotyrosine is present on Tyr-2698. The interval 2730–2769 (ADETKDGPSADSEEEDQPAGSGLTEDLLGLPELASKTYSK) is disordered. The residue at position 2767 (Tyr-2767) is an Iodotyrosine; alternate. Tyr-2767 is modified (thyroxine; alternate). Tyr-2767 carries the post-translational modification Triiodothyronine; alternate. Residue Tyr-2767 is modified to Diiodotyrosine; alternate.

Belongs to the type-B carboxylesterase/lipase family. In terms of assembly, monomer. Homodimer (via ChEL region); occurs in the endoplasmic reticulum and is required for export to the Golgi apparatus. Homooligomer; disulfide-linked; stored in this form in the thyroid follicle lumen. In terms of processing, iodinated on tyrosine residues by TPO. There are 4 pairs of iodinated tyrosines used for coupling: acceptor Tyr-24 is coupled to donor Tyr-149 or Tyr-234, acceptor Tyr-2574 is coupled to donor Tyr-2541, acceptor Tyr-2767 in monomer 1 is coupled to donor Tyr-2767 in monomer 2 and acceptor Tyr-1310 in monomer 1 is coupled to donor Tyr-108 in monomer 2. Sulfated tyrosines are desulfated during iodination. Post-translationally, undergoes sequential proteolysis by cathepsins to release thyroxine (T4) and triiodothyronine (T3) hormones. In the thyroid follicle lumen, cross-linked TG (storage form) is solubilized by limited proteolysis mediated by cathepsins CTSB and/or CTSL. Partially cleaved TG is further processed by CTSK/cathepsin K and/or CTSL resulting in the release of T4. Following endocytosis, further processing occurs leading to the release of T3 and more T4 hormones. As to expression, specifically expressed in the thyroid gland.

It localises to the secreted. Acts as a substrate for the production of iodinated thyroid hormones thyroxine (T4) and triiodothyronine (T3). The synthesis of T3 and T4 involves iodination of selected tyrosine residues of TG/thyroglobulin followed by their oxidative coupling. Following TG re-internalization and lysosomal-mediated proteolysis, T3 and T4 are released from the polypeptide backbone leading to their secretion into the bloodstream. One dimer produces 7 thyroid hormone molecules. This Bos taurus (Bovine) protein is Thyroglobulin (TG).